Consider the following 159-residue polypeptide: Cyclic pyranopterin monophosphate synthase (159 aa).

Residues 75 to 77 (LCH) and 113 to 114 (ME) contribute to the substrate site. Asp128 is a catalytic residue.

The protein belongs to the MoaC family. Homohexamer; trimer of dimers.

The enzyme catalyses (8S)-3',8-cyclo-7,8-dihydroguanosine 5'-triphosphate = cyclic pyranopterin phosphate + diphosphate. Its pathway is cofactor biosynthesis; molybdopterin biosynthesis. Catalyzes the conversion of (8S)-3',8-cyclo-7,8-dihydroguanosine 5'-triphosphate to cyclic pyranopterin monophosphate (cPMP). This is Cyclic pyranopterin monophosphate synthase from Cereibacter sphaeroides (strain ATCC 17023 / DSM 158 / JCM 6121 / CCUG 31486 / LMG 2827 / NBRC 12203 / NCIMB 8253 / ATH 2.4.1.) (Rhodobacter sphaeroides).